Here is a 716-residue protein sequence, read N- to C-terminus: 1,4-alpha-glucan branching enzyme GlgB (716 aa).

The active-site Nucleophile is Asp-399. Residue Glu-452 is the Proton donor of the active site.

The protein belongs to the glycosyl hydrolase 13 family. GlgB subfamily. In terms of assembly, monomer.

It carries out the reaction Transfers a segment of a (1-&gt;4)-alpha-D-glucan chain to a primary hydroxy group in a similar glucan chain.. It participates in glycan biosynthesis; glycogen biosynthesis. Catalyzes the formation of the alpha-1,6-glucosidic linkages in glycogen by scission of a 1,4-alpha-linked oligosaccharide from growing alpha-1,4-glucan chains and the subsequent attachment of the oligosaccharide to the alpha-1,6 position. The polypeptide is 1,4-alpha-glucan branching enzyme GlgB (Rhodopseudomonas palustris (strain ATCC BAA-98 / CGA009)).